Here is a 206-residue protein sequence, read N- to C-terminus: Peptidyl-tRNA hydrolase (206 aa).

Position 19 (Tyr-19) interacts with tRNA. Residue His-24 is the Proton acceptor of the active site. TRNA is bound by residues Tyr-70, Asn-72, and Asn-118.

The protein belongs to the PTH family. In terms of assembly, monomer.

The protein localises to the cytoplasm. The enzyme catalyses an N-acyl-L-alpha-aminoacyl-tRNA + H2O = an N-acyl-L-amino acid + a tRNA + H(+). In terms of biological role, hydrolyzes ribosome-free peptidyl-tRNAs (with 1 or more amino acids incorporated), which drop off the ribosome during protein synthesis, or as a result of ribosome stalling. Catalyzes the release of premature peptidyl moieties from peptidyl-tRNA molecules trapped in stalled 50S ribosomal subunits, and thus maintains levels of free tRNAs and 50S ribosomes. The chain is Peptidyl-tRNA hydrolase from Prochlorococcus marinus (strain MIT 9313).